The primary structure comprises 338 residues: Flap endonuclease 1 (338 aa).

An N-domain region spans residues 1 to 98; it reads MGTDIGDLLQ…ETLSRRKEVR (98 aa). Residues Asp-27, Asp-80, Glu-152, Glu-154, Asp-173, Asp-175, and Asp-236 each contribute to the Mg(2+) site. The tract at residues 116 to 257 is I-domain; it reads AAYKYAQASS…TALKLIKKHG (142 aa). The interaction with PCNA stretch occupies residues 330–338; the sequence is RQKTLDQWF.

It belongs to the XPG/RAD2 endonuclease family. FEN1 subfamily. Interacts with PCNA. PCNA stimulates the nuclease activity without altering cleavage specificity. Mg(2+) serves as cofactor.

In terms of biological role, structure-specific nuclease with 5'-flap endonuclease and 5'-3' exonuclease activities involved in DNA replication and repair. During DNA replication, cleaves the 5'-overhanging flap structure that is generated by displacement synthesis when DNA polymerase encounters the 5'-end of a downstream Okazaki fragment. Binds the unpaired 3'-DNA end and kinks the DNA to facilitate 5' cleavage specificity. Cleaves one nucleotide into the double-stranded DNA from the junction in flap DNA, leaving a nick for ligation. Also involved in the base excision repair (BER) pathway. Acts as a genome stabilization factor that prevents flaps from equilibrating into structures that lead to duplications and deletions. Also possesses 5'-3' exonuclease activity on nicked or gapped double-stranded DNA. This is Flap endonuclease 1 from Methanosarcina acetivorans (strain ATCC 35395 / DSM 2834 / JCM 12185 / C2A).